We begin with the raw amino-acid sequence, 93 residues long: UPF0358 protein ABC2396 (93 aa).

The protein belongs to the UPF0358 family.

This is UPF0358 protein ABC2396 from Shouchella clausii (strain KSM-K16) (Alkalihalobacillus clausii).